We begin with the raw amino-acid sequence, 159 residues long: Probable acetolactate synthase small subunit (159 aa).

Residues 4 to 78 enclose the ACT domain; that stretch reads TIAVLVENKP…ETIKVSEITE (75 aa).

It belongs to the acetolactate synthase small subunit family. In terms of assembly, dimer of large and small chains.

It catalyses the reaction 2 pyruvate + H(+) = (2S)-2-acetolactate + CO2. It participates in amino-acid biosynthesis; L-isoleucine biosynthesis; L-isoleucine from 2-oxobutanoate: step 1/4. The protein operates within amino-acid biosynthesis; L-valine biosynthesis; L-valine from pyruvate: step 1/4. The polypeptide is Probable acetolactate synthase small subunit (ilvH) (Archaeoglobus fulgidus (strain ATCC 49558 / DSM 4304 / JCM 9628 / NBRC 100126 / VC-16)).